The following is a 466-amino-acid chain: Cytochrome c-552 (466 aa).

An N-terminal signal peptide occupies residues 1-27 (MVRNLTKKSFALSALVAASLMASGVMA). His-87 lines the heme c pocket. Residues Cys-115, Cys-118, and Lys-119 each coordinate heme. The heme c site is built by Cys-153, Cys-156, His-157, Cys-195, Cys-198, and His-199. Ca(2+) contacts are provided by Glu-201, Tyr-202, Lys-250, and Gln-252. Tyr-202 contacts substrate. His-253 is a substrate binding site. His-264, Cys-271, Cys-274, His-275, His-290, Cys-303, Cys-306, His-307, and His-382 together coordinate heme c.

It belongs to the cytochrome c-552 family. Ca(2+) is required as a cofactor. Heme c serves as cofactor.

The protein localises to the periplasm. It catalyses the reaction 6 Fe(III)-[cytochrome c] + NH4(+) + 2 H2O = 6 Fe(II)-[cytochrome c] + nitrite + 8 H(+). Its pathway is nitrogen metabolism; nitrate reduction (assimilation). Its function is as follows. Catalyzes the reduction of nitrite to ammonia, consuming six electrons in the process. This is Cytochrome c-552 from Shewanella sediminis (strain HAW-EB3).